The chain runs to 278 residues: tRNA(Phe) (4-demethylwyosine(37)-C(7)) aminocarboxypropyltransferase (278 aa).

Residues Ser109, Arg116, Glu155, and 183–184 (DN) contribute to the S-adenosyl-L-methionine site.

The protein belongs to the class I-like SAM-binding methyltransferase superfamily. TRM5/TYW2 family.

It localises to the cytoplasm. It catalyses the reaction 4-demethylwyosine(37) in tRNA(Phe) + S-adenosyl-L-methionine = 4-demethyl-7-[(3S)-3-amino-3-carboxypropyl]wyosine(37) in tRNA(Phe) + S-methyl-5'-thioadenosine + H(+). Functionally, S-adenosyl-L-methionine-dependent transferase that acts as a component of the wyosine derivatives biosynthesis pathway. Catalyzes the transfer of the alpha-amino-alpha-carboxypropyl (acp) group from S-adenosyl-L-methionine to 4-demethylwyosine (imG-14), forming 7-aminocarboxypropyl-demethylwyosine (wybutosine-86) at position 37 of tRNA(Phe). The protein is tRNA(Phe) (4-demethylwyosine(37)-C(7)) aminocarboxypropyltransferase of Pyrococcus horikoshii (strain ATCC 700860 / DSM 12428 / JCM 9974 / NBRC 100139 / OT-3).